The sequence spans 839 residues: Thymine dioxygenase JBP1 (839 aa).

The tract at residues 86-288 (KVCGVLIPKA…RLSCVFYYRA (203 aa)) is thymine dioxygenase. Residues histidine 213, aspartate 215, and histidine 263 each coordinate Fe cation. Position 279 (arginine 279) interacts with 2-oxoglutarate. A DNA-binding JBP1 domain region spans residues 415–583 (KGDILNEAMN…EIEQARRRAP (169 aa)).

It belongs to the TET family. JBP1 subfamily. As to quaternary structure, monomer. Binds to DNA as a monomer. The cofactor is Fe(2+).

The protein resides in the nucleus. It carries out the reaction thymine + 2-oxoglutarate + O2 = 5-hydroxymethyluracil + succinate + CO2. Its function is as follows. Dioxygenase that catalyzes the first step of DNA base J (beta-d-glucosyl-HOMedU) biosynthesis by converting thymine to 5-hydroxymethyluracil (HOMedU). DNA base J is a hypermodified thymidine residue found in the genome of kinetoplastid parasites, which is localized primarily to repetitive DNA, namely the telomeres, and is implicated in the regulation of antigenic variation. Also specifically binds to base J-containing DNA (J-DNA). Involved in propagation and maintenance of DNA base J synthesis initiated by JBP2 by specifically binding already synthesized DNA base J and propagating J synthesis. Thymine dioxygenase activity and J-DNA-binding are independent functions. This Trypanosoma brucei brucei (strain 927/4 GUTat10.1) protein is Thymine dioxygenase JBP1 (JBP1).